A 132-amino-acid chain; its full sequence is MGNDTLANMITCIRNANLRKTKTVEILATNTNRSIAKILLEEGFIDELRERQEDTKRLLVITLRYQGRKRKPYITTVKQISKAGLRVYSNHKDIPRVLGGMGIVILSTSQGIIIDREARDKQIGGEILCYVW.

Belongs to the universal ribosomal protein uS8 family. Part of the 30S ribosomal subunit.

It localises to the plastid. It is found in the chloroplast. Functionally, one of the primary rRNA binding proteins, it binds directly to 16S rRNA central domain where it helps coordinate assembly of the platform of the 30S subunit. This is Small ribosomal subunit protein uS8c (rps8) from Staurastrum punctulatum (Green alga).